Consider the following 1458-residue polypeptide: Phospholipase B1, membrane-associated (1458 aa).

The N-terminal stretch at 1 to 21 is a signal peptide; the sequence is MGLRPGIFLLELLLLLGQGTP. Topologically, residues 22-1417 are extracellular; that stretch reads QIHTSPRKST…QAEEAPEVLY (1396 aa). Tandem repeats lie at residues 39 to 347, 362 to 707, and 708 to 1054. The segment at 39–1402 is 4 X 308-326 AA approximate repeats; it reads ETLKNSPFPC…SPYLYTLRNS (1364 aa). N-linked (GlcNAc...) asparagine glycans are attached at residues asparagine 173 and asparagine 240. The active site involves serine 400. The N-linked (GlcNAc...) asparagine glycan is linked to asparagine 493. Residue aspartate 514 is part of the active site. Residues asparagine 529 and asparagine 590 are each glycosylated (N-linked (GlcNAc...) asparagine). Histidine 655 is an active-site residue. 8 N-linked (GlcNAc...) asparagine glycosylation sites follow: asparagine 690, asparagine 783, asparagine 797, asparagine 809, asparagine 1055, asparagine 1113, asparagine 1275, and asparagine 1378. Residues 1064-1402 form repeat 4; sequence IENWGSDFLC…SPYLYTLRNS (339 aa). The necessary for membrane localization stretch occupies residues 1403–1445; sequence RLLPDQAEEAPEVLYWAVPVAAGVGLVVGIIGTVVWRCRRGGR. The chain crosses the membrane as a helical span at residues 1418-1438; that stretch reads WAVPVAAGVGLVVGIIGTVVW. At 1439–1458 the chain is on the cytoplasmic side; it reads RCRRGGRREDPPMSLRTVAL.

Belongs to the 'GDSL' lipolytic enzyme family. Phospholipase B1 subfamily. Post-translationally, undergoes proteolytic cleavage in the ileum. As to expression, expressed in the epidermis (at protein level).

The protein resides in the apical cell membrane. It carries out the reaction a 1,2-diacyl-sn-glycero-3-phosphocholine + H2O = a 1-acyl-sn-glycero-3-phosphocholine + a fatty acid + H(+). The enzyme catalyses a 1-O-alkyl-2-acyl-sn-glycero-3-phosphocholine + H2O = a 1-O-alkyl-sn-glycero-3-phosphocholine + a fatty acid + H(+). It catalyses the reaction a 1-acyl-sn-glycero-3-phosphocholine + H2O = sn-glycerol 3-phosphocholine + a fatty acid + H(+). The catalysed reaction is a triacylglycerol + H2O = a diacylglycerol + a fatty acid + H(+). It carries out the reaction 1,2-dihexadecanoyl-sn-glycero-3-phosphocholine + H2O = 1-hexadecanoyl-sn-glycero-3-phosphocholine + hexadecanoate + H(+). The enzyme catalyses 1-hexadecanoyl-2-(9Z-octadecenoyl)-sn-glycero-3-phosphocholine + H2O = 1-hexadecanoyl-sn-glycero-3-phosphocholine + (9Z)-octadecenoate + H(+). It catalyses the reaction 1,2-di-(9Z-octadecenoyl)-sn-glycero-3-phosphocholine + H2O = 1-(9Z-octadecenoyl)-sn-glycero-3-phosphocholine + (9Z)-octadecenoate + H(+). The catalysed reaction is 1-hexadecanoyl-2-(9Z,12Z-octadecadienoyl)-sn-glycero-3-phosphocholine + H2O = (9Z,12Z)-octadecadienoate + 1-hexadecanoyl-sn-glycero-3-phosphocholine + H(+). It carries out the reaction 1-hexadecanoyl-2-(9Z,12Z-octadecadienoyl)-sn-glycero-3-phosphocholine + H2O = 2-(9Z,12Z-octadecadienoyl)-sn-glycero-3-phosphocholine + hexadecanoate + H(+). The enzyme catalyses 1-hexadecanoyl-2-(9Z-octadecenoyl)-sn-glycero-3-phosphoethanolamine + H2O = 1-hexadecanoyl-sn-glycero-3-phosphoethanolamine + (9Z)-octadecenoate + H(+). It catalyses the reaction 1-hexadecanoyl-2-(9Z-octadecenoyl)-sn-glycero-3-phospho-(1'-sn-glycerol) + H2O = 1-hexadecanoyl-sn-glycero-3-phospho-(1'-sn-glycerol) + (9Z)-octadecenoate + H(+). The catalysed reaction is 1,2-dihexadecanoyl-sn-glycero-3-phosphocholine + 2 H2O = sn-glycerol 3-phosphocholine + 2 hexadecanoate + 2 H(+). It carries out the reaction 1-O-hexadecyl-2-(9Z)-octadecenoyl-sn-glycero-3-phosphocholine + H2O = 1-O-hexadecyl-sn-glycero-3-phosphocholine + (9Z)-octadecenoate + H(+). The enzyme catalyses 1-hexadecanoyl-sn-glycero-3-phosphocholine + H2O = sn-glycerol 3-phosphocholine + hexadecanoate + H(+). It catalyses the reaction 1,2,3-tri-(9Z-octadecenoyl)-glycerol + H2O = di-(9Z)-octadecenoylglycerol + (9Z)-octadecenoate + H(+). The catalysed reaction is 1-hexadecanoyl-2-(9Z)-octadecenoyl-3-octadecanoyl-sn-glycerol + H2O = 1-hexadecanoyl-2-(9Z-octadecenoyl)-sn-glycerol + octadecanoate + H(+). It carries out the reaction 1,3-dihexadecanoyl-2-(9Z-octadecenoyl)glycerol + H2O = 1,3-dihexadecanoylglycerol + (9Z)-octadecenoate + H(+). The enzyme catalyses 1,3-dihexadecanoyl-2-(9Z-octadecenoyl)glycerol + H2O = 1-hexadecanoyl-2-(9Z-octadecenoyl)-glycerol + hexadecanoate + H(+). It catalyses the reaction 1-hexadecanoyl-2-(9Z)-octadecenoyl-3-octadecanoyl-sn-glycerol + H2O = 1-hexadecanoyl-3-octadecanoyl-sn-glycerol + (9Z)-octadecenoate + H(+). The catalysed reaction is 1-hexadecanoyl-2-(9Z)-octadecenoyl-3-octadecanoyl-sn-glycerol + H2O = 2-(9Z-octadecenoyl)-3-octadecanoyl-sn-glycerol + hexadecanoate + H(+). It carries out the reaction 1-octadecanoyl-2-(9Z,12Z)-octadecadienoyl-sn-glycerol + H2O = 1-octadecanoyl-sn-glycerol + (9Z,12Z)-octadecadienoate + H(+). The enzyme catalyses 1,2-di-(9Z-octadecenoyl)-sn-glycerol + H2O = 1-(9Z-octadecenoyl)-sn-glycerol + (9Z)-octadecenoate + H(+). It catalyses the reaction 2,3-di-(9Z)-octadecenoyl-sn-glycerol + H2O = 3-(9Z-octadecenoyl)-sn-glycerol + (9Z)-octadecenoate + H(+). The catalysed reaction is 1,3-di-(9Z-octadecenoyl)-glycerol + H2O = 1-(9Z-octadecenoyl)-glycerol + (9Z)-octadecenoate + H(+). It carries out the reaction 1-(9Z-octadecenoyl)-glycerol + H2O = glycerol + (9Z)-octadecenoate + H(+). The enzyme catalyses 2-(9Z-octadecenoyl)-glycerol + H2O = glycerol + (9Z)-octadecenoate + H(+). Its function is as follows. Calcium-independent membrane-associated phospholipase that catalyzes complete diacylation of phospholipids by hydrolyzing both sn-1 and sn-2 fatty acyl chains attached to the glycerol backbone (phospholipase B activity). Has dual phospholipase and lysophospholipase activities toward diacylphospholipids. Preferentially cleaves sn-2 ester bonds over sn-1 bonds. Acts as a lipase toward glycerolipid substrates. Hydrolyzes fatty acyl chains of diacylglycerols with preference for the sn-2 position and of triacylglycerols with not positional selectivity. May also hydrolyze long chain retinyl esters such as retinyl palmitate. May contribute to digestion of dietary phospholipids, glycerolipids and retinoids, facilitating lipid absorption at the brush border. In Homo sapiens (Human), this protein is Phospholipase B1, membrane-associated (PLB1).